Here is a 228-residue protein sequence, read N- to C-terminus: uncharacterized protein (228 aa).

Transmembrane regions (helical) follow at residues 14–34, 42–62, 130–150, 156–176, and 192–212; these read HTIS…MLLV, VALF…AITL, FIFS…LVGS, FSFD…VLFM, and IVIA…LIAL.

This sequence belongs to the AzlC family.

It is found in the cell membrane. This is an uncharacterized protein from Helicobacter pylori (strain ATCC 700392 / 26695) (Campylobacter pylori).